The following is a 549-amino-acid chain: Glucose-6-phosphate isomerase (549 aa).

The active-site Proton donor is Glu-353. Residues His-384 and Lys-513 contribute to the active site.

It belongs to the GPI family.

It localises to the cytoplasm. It catalyses the reaction alpha-D-glucose 6-phosphate = beta-D-fructose 6-phosphate. Its pathway is carbohydrate biosynthesis; gluconeogenesis. It participates in carbohydrate degradation; glycolysis; D-glyceraldehyde 3-phosphate and glycerone phosphate from D-glucose: step 2/4. In terms of biological role, catalyzes the reversible isomerization of glucose-6-phosphate to fructose-6-phosphate. The chain is Glucose-6-phosphate isomerase from Brucella abortus (strain S19).